Here is a 510-residue protein sequence, read N- to C-terminus: Ent-sandaracopimaradiene 3-hydroxylase (510 aa).

A helical membrane pass occupies residues 4-24; that stretch reads MLVAGAGAAAVAAVGGLVAAA. Position 454 (Cys-454) interacts with heme.

The protein belongs to the cytochrome P450 family. Interacts with the rice dwarf virus (RDV) P2 protein. It depends on heme as a cofactor. Expressed in leaf blades and sheaths, stems and panicles.

The protein localises to the membrane. It carries out the reaction ent-sandaracopimara-8(14),15-diene + reduced [NADPH--hemoprotein reductase] + O2 = ent-sandaracopimaradien-3beta-ol + oxidized [NADPH--hemoprotein reductase] + H2O + H(+). The enzyme catalyses 9beta-pimara-7,15-diene + reduced [NADPH--hemoprotein reductase] + O2 = 9beta-pimara-7,15-diene-3beta-ol + oxidized [NADPH--hemoprotein reductase] + H2O + H(+). In terms of biological role, catalyzes the hydroxylation of ent-sandaracopimaradiene at the C3alpha position to produce ent-3beta-hydroxy-sandaracopimaradiene, an intermediates for the biosynthesis of oryzalexin D and oryzalexin E phytoalexins. Catalyzes the hydroxylation of ent-cassadiene at the C3alpha position to produce 3alpha-hydroxy-ent-cassadiene, which may be an intermediate for the biosynthesis of phytocassane phytoalexins. Catalyzes the hydroxylation of syn-pimaradiene (9-beta-pimara-7,15-diene) at the C3beta position to produce 3-beta-syn-pimaradiene. Can hydroxylate ent-kaurene in vitro, but the product is not ent-kauren-19-ol as expected for ent-kaurene oxidase activity. This chain is Ent-sandaracopimaradiene 3-hydroxylase, found in Oryza sativa subsp. japonica (Rice).